Here is a 318-residue protein sequence, read N- to C-terminus: L-lactate dehydrogenase (318 aa).

Positions 15, 36, and 41 each coordinate NAD(+). Arg89 serves as a coordination point for substrate. NAD(+) contacts are provided by residues Ser102, 119–121 (ITN), and Thr144. 121–124 (NPVD) contacts substrate. 149–152 (DSAR) lines the substrate pocket. Residue His176 is the Proton acceptor of the active site. Position 231 (Thr231) interacts with substrate.

Belongs to the LDH/MDH superfamily. LDH family. Homotetramer.

It localises to the cytoplasm. It catalyses the reaction (S)-lactate + NAD(+) = pyruvate + NADH + H(+). Its pathway is fermentation; pyruvate fermentation to lactate; (S)-lactate from pyruvate: step 1/1. Functionally, catalyzes the conversion of lactate to pyruvate. This Fusobacterium nucleatum subsp. nucleatum (strain ATCC 25586 / DSM 15643 / BCRC 10681 / CIP 101130 / JCM 8532 / KCTC 2640 / LMG 13131 / VPI 4355) protein is L-lactate dehydrogenase.